The following is a 155-amino-acid chain: Ribosome maturation factor RimP (155 aa).

It belongs to the RimP family.

The protein resides in the cytoplasm. Required for maturation of 30S ribosomal subunits. The chain is Ribosome maturation factor RimP from Salinibacter ruber (strain DSM 13855 / M31).